The sequence spans 320 residues: Ferrochelatase (320 aa).

The Fe cation site is built by H194 and E275.

Belongs to the ferrochelatase family. In terms of assembly, monomer.

It localises to the cytoplasm. It carries out the reaction heme b + 2 H(+) = protoporphyrin IX + Fe(2+). The protein operates within porphyrin-containing compound metabolism; protoheme biosynthesis; protoheme from protoporphyrin-IX: step 1/1. Catalyzes the ferrous insertion into protoporphyrin IX. The polypeptide is Ferrochelatase (Salmonella paratyphi A (strain ATCC 9150 / SARB42)).